Here is a 409-residue protein sequence, read N- to C-terminus: Mitochondrial protein import protein MAS5 (409 aa).

Positions 1–172 (MVKETKFYDI…NGQGIKFVTR (172 aa)) are necessary for HAP1 repression in the absence of heme. In terms of domain architecture, J spans 4-72 (ETKFYDILGV…RDIYDQFGED (69 aa)). Residues I116 and 135 to 137 (LAL) contribute to the substrate site. Residues 130-213 (GRTAKLALNK…CNGKKVENER (84 aa)) form a CR-type zinc finger. Residues C143, C146, C159, C162, C185, and C188 each coordinate Zn(2+). 3 CXXCXGXG motif repeats span residues 143 to 150 (CKECEGRG), 159 to 166 (CTSCNGQG), and 185 to 192 (CDVCHGTG). K198 participates in a covalent cross-link: Glycyl lysine isopeptide (Lys-Gly) (interchain with G-Cter in ubiquitin). Zn(2+)-binding residues include C201 and C204. One copy of the CXXCXGXG motif repeat lies at 201–208 (CKSCNGKK). Residues 215-216 (IL) and 247-249 (VVF) each bind substrate. The disordered stretch occupies residues 382 to 409 (RTRASRGGANYDSDEEEQGGEGVQCASQ). C406 carries the cysteine methyl ester modification. C406 is lipidated: S-farnesyl cysteine. The propeptide at 407 to 409 (ASQ) is removed in mature form.

Homodimer. Interacts with HAP1. Component of the HMC including HAP1, SRO9 and YDJ1.

The protein localises to the cytoplasm. It localises to the perinuclear region. Its function is as follows. Probably involved in mitochondrial protein import. Is also required for efficient translocation of pre-pro-alpha-factor. Involved in heme regulation of HAP1, as a component of the high-molecular-weight (HMC) complex. This Saccharomyces cerevisiae (strain ATCC 204508 / S288c) (Baker's yeast) protein is Mitochondrial protein import protein MAS5 (YDJ1).